Here is a 486-residue protein sequence, read N- to C-terminus: MTTFYTVISWLSVFGYWLLIAGVTLRILMKRRAVPSAMAWLLIIYILPLVGIIAYLSFGELHLGKRRAERAKAMWPSTARWLSELKECQHIFANSNSEVASPLFQLCERRQGINGVKGNQLQLLTTTDDTLKALVRDIELARHNIEMVFYIWQPGGLVDQVAESLMAAARRGVHCRLLLDSAGSKQFFRSPYPAMMRNAGIEVVEALKVNVFRMFLRRMDLRQHRKIVLIDNYVAYTGSMNMVDPRFFKQDAGVGQWIDMMARMEGPVATTLGIVYACDWEIETGKRILPPPPDANIMPFEEETGHTIQVIASGPGFPEEMIHQALLTAVYAAREQLIMTTPYFVPSDDLLHAICTAAQRGVDVSIIVPRENDSMMVRWASRAFFTELLNAGVKIYQFEGGLLHSKSVLVDGQLSLVGTVNLDMRSLWLNFEITLVIDDDGFGADLAQVQDDYIARSALLDGERWNKRPLWHRVTERLFYFFSPLL.

Helical transmembrane passes span 3–23 and 38–58; these read TFYTVISWLSVFGYWLLIAGV and MAWLLIIYILPLVGIIAYLSF. 2 PLD phosphodiesterase domains span residues 219-246 and 399-426; these read MDLRQHRKIVLIDNYVAYTGSMNMVDPR and EGGLLHSKSVLVDGQLSLVGTVNLDMRS. Active-site residues include His-224, Lys-226, Asp-231, His-404, Lys-406, and Asp-411.

The protein belongs to the phospholipase D family. Cardiolipin synthase subfamily. ClsA sub-subfamily.

The protein resides in the cell inner membrane. The catalysed reaction is 2 a 1,2-diacyl-sn-glycero-3-phospho-(1'-sn-glycerol) = a cardiolipin + glycerol. Functionally, catalyzes the reversible phosphatidyl group transfer from one phosphatidylglycerol molecule to another to form cardiolipin (CL) (diphosphatidylglycerol) and glycerol. This chain is Cardiolipin synthase A, found in Yersinia pseudotuberculosis serotype O:1b (strain IP 31758).